The chain runs to 567 residues: Urease subunit alpha (567 aa).

The region spanning G129–F567 is the Urease domain. Positions 134, 136, and 217 each coordinate Ni(2+). K217 is subject to N6-carboxylysine. H219 provides a ligand contact to substrate. Positions 246 and 272 each coordinate Ni(2+). The active-site Proton donor is the H320. Ni(2+) is bound at residue D360.

It belongs to the metallo-dependent hydrolases superfamily. Urease alpha subunit family. Heterotrimer of UreA (gamma), UreB (beta) and UreC (alpha) subunits. Three heterotrimers associate to form the active enzyme. The cofactor is Ni cation. In terms of processing, carboxylation allows a single lysine to coordinate two nickel ions.

It is found in the cytoplasm. The catalysed reaction is urea + 2 H2O + H(+) = hydrogencarbonate + 2 NH4(+). Its pathway is nitrogen metabolism; urea degradation; CO(2) and NH(3) from urea (urease route): step 1/1. The sequence is that of Urease subunit alpha from Pseudomonas putida (strain ATCC 700007 / DSM 6899 / JCM 31910 / BCRC 17059 / LMG 24140 / F1).